Reading from the N-terminus, the 206-residue chain is Large ribosomal subunit protein uL4 (206 aa).

Residues 43 to 78 form a disordered region; the sequence is NQRQGTHDTKTRAEVRGGGRKPWRQKGTGRARAGSS. A compositionally biased stretch (basic and acidic residues) spans 47 to 59; sequence GTHDTKTRAEVRG. Residues 60–71 show a composition bias toward basic residues; the sequence is GGRKPWRQKGTG.

It belongs to the universal ribosomal protein uL4 family. As to quaternary structure, part of the 50S ribosomal subunit.

Its function is as follows. One of the primary rRNA binding proteins, this protein initially binds near the 5'-end of the 23S rRNA. It is important during the early stages of 50S assembly. It makes multiple contacts with different domains of the 23S rRNA in the assembled 50S subunit and ribosome. Forms part of the polypeptide exit tunnel. The polypeptide is Large ribosomal subunit protein uL4 (Desulforamulus reducens (strain ATCC BAA-1160 / DSM 100696 / MI-1) (Desulfotomaculum reducens)).